The following is a 220-amino-acid chain: MKSVIYHALSQKEANDSDVQPSGAQRAEAFVRAFLKRSTPRMSPQAREDQLQRKAVVLEYFTRHKRKEKKKKAKGLSARQRRELRLFDIKPEQQRYSLFLPLHELWKQYIRDLCNGLKPDTQPQMIQAKLLKADLHGAIISVTKSKCPSYVGITGILLQETKHIFKIITKEDRLKVIPKLNCVFTVEIDGFISYIYGSKFQLRSSERSAKKFKAKGTIDL.

At Ser10 the chain carries Phosphoserine.

Belongs to the eukaryotic/archaeal RNase P protein component 1 family. As to quaternary structure, component of nuclear RNase P and RNase MRP ribonucleoproteins. RNase P consists of a catalytic RNA moiety and 10 different protein chains; POP1, POP4, POP5, POP7, RPP14, RPP21, RPP25, RPP30, RPP38 and RPP40. Within the RNase P complex, POP1, POP7 and RPP25 form the 'finger' subcomplex, POP5, RPP14, RPP40 and homodimeric RPP30 form the 'palm' subcomplex, and RPP21, POP4 and RPP38 form the 'wrist' subcomplex. All subunits of the RNase P complex interact with the catalytic RNA. Several subunits of RNase P are also part of the RNase MRP complex. RNase MRP consists of a catalytic RNA moiety and about 8 protein subunits; POP1, POP7, RPP25, RPP30, RPP38, RPP40 and possibly also POP4 and POP5.

Its subcellular location is the nucleus. The protein resides in the nucleolus. Component of ribonuclease P, a ribonucleoprotein complex that generates mature tRNA molecules by cleaving their 5'-ends. The polypeptide is Ribonuclease P protein subunit p29 (POP4) (Pongo abelii (Sumatran orangutan)).